The chain runs to 197 residues: Beta-crystallin A2 (197 aa).

The segment at 1–11 (MSSAPAPGSAP) is N-terminal arm. Beta/gamma crystallin 'Greek key' domains are found at residues 12–52 (VCLT…KVEN) and 53–99 (GAWV…RPVL). The interval 100-105 (CANHSD) is connecting peptide. Beta/gamma crystallin 'Greek key' domains lie at 106 to 147 (SRVT…KVSS) and 148 to 196 (GAWV…RRVQ).

Belongs to the beta/gamma-crystallin family. As to quaternary structure, homo/heterodimer, or complexes of higher-order. The structure of beta-crystallin oligomers seems to be stabilized through interactions between the N-terminal arms.

Crystallins are the dominant structural components of the vertebrate eye lens. This chain is Beta-crystallin A2 (Cryba2), found in Mus musculus (Mouse).